The chain runs to 706 residues: Drebrin (706 aa).

The residue at position 2 (A2) is an N-acetylalanine. The ADF-H domain occupies 3-134 (GVSFSGHRLE…DAGAIGQRLS (132 aa)). Phosphoserine occurs at positions 141 and 142. Over residues 209 to 236 (ERMEQERQEQEERERRYREREQQIEEHR) the composition is skewed to basic and acidic residues. Residues 209-497 (ERMEQERQEQ…AEPAASVTSV (289 aa)) are disordered. S241 bears the Phosphoserine mark. The span at 288 to 298 (DNPREFFRQQE) shows a compositional bias: basic and acidic residues. Over residues 331–345 (SDSGPSSSSSSSSSP) the composition is skewed to low complexity. A Phosphoserine modification is found at S344. The segment covering 357–366 (RTPNLSSSLP) has biased composition (polar residues). A phosphothreonine mark is found at T379 and T383. Residues 382 to 396 (PTRSPSDSSTASTPI) show a composition bias toward polar residues. 3 positions are modified to phosphoserine: S385, S387, and S393. T394 carries the phosphothreonine modification. Pro residues predominate over residues 411–422 (QPPPPPPPPPPT). Residues 453–497 (AAEPPQAQEPPLLQSSPLEDSMCTESPEQAALAAPAEPAASVTSV) are compositionally biased toward low complexity. Position 468 is a phosphoserine (S468). Phosphothreonine is present on T550. Positions 633–677 (EPHLLTNGETTQKEGTQASEGYFSQSQEEEFAQSEEPCAKVPPPV) are disordered. The segment covering 639 to 651 (NGETTQKEGTQAS) has biased composition (polar residues). S658 is modified (phosphoserine).

Interacts with RUFY3. Interacts with CXCR4; this interaction is enhanced by antigenic stimulation. Interacts (via ADF-H domain) with ZMYND8 (via N-terminus); the interaction leads to sequestering of ZMYND8 in the cytoplasm. Expressed in the hippocampus, with expression in the pyramidal cells of CA1, CA2 and CA3 and in the granule cells of the dentate gyrus (at protein level). Highly expressed in brain, also present in stomach and to a lesser degree in kidney, colon, and urinary bladder. The E2 isoform is specifically expressed in adult stomach, kidney, and cultured cells.

The protein localises to the cytoplasm. The protein resides in the cell projection. It is found in the dendrite. Its subcellular location is the cell cortex. It localises to the cell junction. The protein localises to the growth cone. Actin cytoskeleton-organizing protein that plays a role in the formation of cell projections. Required for actin polymerization at immunological synapses (IS) and for the recruitment of the chemokine receptor CXCR4 to IS. Plays a role in dendritic spine morphogenesis and organization, including the localization of the dopamine receptor DRD1 to the dendritic spines. Involved in memory-related synaptic plasticity in the hippocampus. The polypeptide is Drebrin (Dbn1) (Mus musculus (Mouse)).